A 468-amino-acid chain; its full sequence is ATP synthase subunit beta 3 (468 aa).

Position 155–162 (155–162 (GGAGVGKT)) interacts with ATP.

It belongs to the ATPase alpha/beta chains family. As to quaternary structure, F-type ATPases have 2 components, CF(1) - the catalytic core - and CF(0) - the membrane proton channel. CF(1) has five subunits: alpha(3), beta(3), gamma(1), delta(1), epsilon(1). CF(0) has three main subunits: a(1), b(2) and c(9-12). The alpha and beta chains form an alternating ring which encloses part of the gamma chain. CF(1) is attached to CF(0) by a central stalk formed by the gamma and epsilon chains, while a peripheral stalk is formed by the delta and b chains.

The protein localises to the cell inner membrane. It carries out the reaction ATP + H2O + 4 H(+)(in) = ADP + phosphate + 5 H(+)(out). Produces ATP from ADP in the presence of a proton gradient across the membrane. The catalytic sites are hosted primarily by the beta subunits. This is ATP synthase subunit beta 3 from Syntrophotalea carbinolica (strain DSM 2380 / NBRC 103641 / GraBd1) (Pelobacter carbinolicus).